The sequence spans 197 residues: Glycerol-3-phosphate acyltransferase (197 aa).

The next 6 helical transmembrane spans lie at 1–21 (MNIL…GFLI), 50–70 (WPAL…VKIA), 77–97 (GLIE…PIWL), 111–131 (MFLA…LIVL), 137–157 (VSLS…FYLG), and 158–178 (KFMH…IWKH).

It belongs to the PlsY family. In terms of assembly, probably interacts with PlsX.

Its subcellular location is the cell inner membrane. The catalysed reaction is an acyl phosphate + sn-glycerol 3-phosphate = a 1-acyl-sn-glycero-3-phosphate + phosphate. Its pathway is lipid metabolism; phospholipid metabolism. Catalyzes the transfer of an acyl group from acyl-phosphate (acyl-PO(4)) to glycerol-3-phosphate (G3P) to form lysophosphatidic acid (LPA). This enzyme utilizes acyl-phosphate as fatty acyl donor, but not acyl-CoA or acyl-ACP. The protein is Glycerol-3-phosphate acyltransferase of Prochlorococcus marinus (strain MIT 9301).